The primary structure comprises 351 residues: Autoinducer 2 import system permease protein LsrC (351 aa).

A run of 9 helical transmembrane segments spans residues 14–34 (LLAILTLFALLGIIDRNYFSL), 39–59 (MIFSSAQILILLAIGATLVML), 70–90 (ITGLCAVTVGMALNAGFGLVA), 93–113 (LFALLVGMVAGFFNGILVTWL), 115–135 (IPAIVATLGTLGLYRGLMLLL), 155–175 (ILFSISPIGWLTMLLILSMAW), 213–233 (MNGVMAALAGIVFASQIGFIP), 252–272 (GISLLGGTGTIIGAILGAFLL), and 284–304 (LPAWWNDFIAGLVLLGVLVFD).

This sequence belongs to the binding-protein-dependent transport system permease family. AraH/RbsC subfamily. As to quaternary structure, the complex is composed of two ATP-binding proteins (LsrA), two transmembrane proteins (LsrC and LsrD) and a solute-binding protein (LsrB).

It is found in the cell inner membrane. Part of the ABC transporter complex LsrABCD involved in autoinducer 2 (AI-2) import. Probably responsible for the translocation of the substrate across the membrane. The sequence is that of Autoinducer 2 import system permease protein LsrC (lsrC) from Yersinia pseudotuberculosis serotype IB (strain PB1/+).